We begin with the raw amino-acid sequence, 883 residues long: Aldehyde-alcohol dehydrogenase (883 aa).

Residues 13–456 (KLVAEKHVDE…DNVSAINLLN (444 aa)) form an aldehyde dehydrogenase region. NAD(+)-binding positions include 121–126 (ITPTTN), G206, and G224. C257 functions as the Nucleophile in the catalytic mechanism. Residues E355, L435, and 438-443 (GSYGRN) each bind NAD(+). The segment at 457-464 (IKKVGRRR) is linker. Residues D500, D534, 561-565 (GSPMD), 612-613 (TT), V625, K634, and L653 contribute to the NAD(+) site. 4 residues coordinate Fe cation: D668, H672, H736, and H750.

In the N-terminal section; belongs to the aldehyde dehydrogenase family. This sequence in the C-terminal section; belongs to the iron-containing alcohol dehydrogenase family. Fe(2+) is required as a cofactor.

The catalysed reaction is an aldehyde + NAD(+) + H2O = a carboxylate + NADH + 2 H(+). It catalyses the reaction ethanol + NAD(+) = acetaldehyde + NADH + H(+). Functionally, has alcohol dehydrogenase activity. Has aldehyde dehydrogenase activity. Plays a role in enhancing virulence in mice, under ethanol stress conditions, perhaps by inducing expression of pneumolysin (Ply) and increasing production of hydrogen peroxide H(2)O(2). May be considered a potential virulence factor. The sequence is that of Aldehyde-alcohol dehydrogenase from Streptococcus pneumoniae serotype 2 (strain D39 / NCTC 7466).